Reading from the N-terminus, the 227-residue chain is Cytochrome c oxidase subunit 2 (227 aa).

The Mitochondrial intermembrane portion of the chain corresponds to 1-14 (MAHAAQMGLQDATS). A helical membrane pass occupies residues 15–45 (PIMEELISFHDHALMIIFLISFLVLYALFLT). The Mitochondrial matrix segment spans residues 46-59 (LTTKLTNTNITDAQ). A helical transmembrane segment spans residues 60–87 (EMETVWTILPAIILVLIALPSLRILYLT). The Mitochondrial intermembrane segment spans residues 88-227 (DEINDPSFTI…IFEMGPVFTL (140 aa)). The Cu cation site is built by His-161, Cys-196, Glu-198, Cys-200, His-204, and Met-207. Glu-198 contacts Mg(2+).

It belongs to the cytochrome c oxidase subunit 2 family. In terms of assembly, component of the cytochrome c oxidase (complex IV, CIV), a multisubunit enzyme composed of 14 subunits. The complex is composed of a catalytic core of 3 subunits MT-CO1, MT-CO2 and MT-CO3, encoded in the mitochondrial DNA, and 11 supernumerary subunits COX4I, COX5A, COX5B, COX6A, COX6B, COX6C, COX7A, COX7B, COX7C, COX8 and NDUFA4, which are encoded in the nuclear genome. The complex exists as a monomer or a dimer and forms supercomplexes (SCs) in the inner mitochondrial membrane with NADH-ubiquinone oxidoreductase (complex I, CI) and ubiquinol-cytochrome c oxidoreductase (cytochrome b-c1 complex, complex III, CIII), resulting in different assemblies (supercomplex SCI(1)III(2)IV(1) and megacomplex MCI(2)III(2)IV(2)). Found in a complex with TMEM177, COA6, COX18, COX20, SCO1 and SCO2. Interacts with TMEM177 in a COX20-dependent manner. Interacts with COX20. Interacts with COX16. The cofactor is Cu cation.

The protein localises to the mitochondrion inner membrane. The catalysed reaction is 4 Fe(II)-[cytochrome c] + O2 + 8 H(+)(in) = 4 Fe(III)-[cytochrome c] + 2 H2O + 4 H(+)(out). Functionally, component of the cytochrome c oxidase, the last enzyme in the mitochondrial electron transport chain which drives oxidative phosphorylation. The respiratory chain contains 3 multisubunit complexes succinate dehydrogenase (complex II, CII), ubiquinol-cytochrome c oxidoreductase (cytochrome b-c1 complex, complex III, CIII) and cytochrome c oxidase (complex IV, CIV), that cooperate to transfer electrons derived from NADH and succinate to molecular oxygen, creating an electrochemical gradient over the inner membrane that drives transmembrane transport and the ATP synthase. Cytochrome c oxidase is the component of the respiratory chain that catalyzes the reduction of oxygen to water. Electrons originating from reduced cytochrome c in the intermembrane space (IMS) are transferred via the dinuclear copper A center (CU(A)) of subunit 2 and heme A of subunit 1 to the active site in subunit 1, a binuclear center (BNC) formed by heme A3 and copper B (CU(B)). The BNC reduces molecular oxygen to 2 water molecules using 4 electrons from cytochrome c in the IMS and 4 protons from the mitochondrial matrix. The sequence is that of Cytochrome c oxidase subunit 2 (MT-CO2) from Symphalangus syndactylus (Siamang).